The primary structure comprises 96 residues: uncharacterized protein (96 aa).

The next 3 membrane-spanning stretches (helical) occupy residues 2 to 22, 38 to 58, and 68 to 88; these read FIFNVLTIRCTFHVLFAICYF, AGLKIFLVFELAVTIFNTVML, and LTLAILIVSVVMFVYHQQLIV.

Its subcellular location is the membrane. This is an uncharacterized protein from Schizosaccharomyces pombe (strain 972 / ATCC 24843) (Fission yeast).